Here is a 374-residue protein sequence, read N- to C-terminus: uncharacterized protein (374 aa).

Residues 27 to 49 form a helical membrane-spanning segment; sequence AISPILALLIVLGVTIVVGAVFY.

It is found in the membrane. This is an uncharacterized protein from Methanocaldococcus jannaschii (strain ATCC 43067 / DSM 2661 / JAL-1 / JCM 10045 / NBRC 100440) (Methanococcus jannaschii).